Here is a 403-residue protein sequence, read N- to C-terminus: Probable tRNA sulfurtransferase (403 aa).

The 106-residue stretch at 60–165 (QLAEERLKPI…KEGVFLSCRT (106 aa)) folds into the THUMP domain. ATP is bound by residues 183–184 (ML), 208–209 (HF), arginine 265, glycine 287, and glutamine 296.

This sequence belongs to the ThiI family.

The protein localises to the cytoplasm. It carries out the reaction [ThiI sulfur-carrier protein]-S-sulfanyl-L-cysteine + a uridine in tRNA + 2 reduced [2Fe-2S]-[ferredoxin] + ATP + H(+) = [ThiI sulfur-carrier protein]-L-cysteine + a 4-thiouridine in tRNA + 2 oxidized [2Fe-2S]-[ferredoxin] + AMP + diphosphate. It catalyses the reaction [ThiS sulfur-carrier protein]-C-terminal Gly-Gly-AMP + S-sulfanyl-L-cysteinyl-[cysteine desulfurase] + AH2 = [ThiS sulfur-carrier protein]-C-terminal-Gly-aminoethanethioate + L-cysteinyl-[cysteine desulfurase] + A + AMP + 2 H(+). It functions in the pathway cofactor biosynthesis; thiamine diphosphate biosynthesis. Catalyzes the ATP-dependent transfer of a sulfur to tRNA to produce 4-thiouridine in position 8 of tRNAs, which functions as a near-UV photosensor. Also catalyzes the transfer of sulfur to the sulfur carrier protein ThiS, forming ThiS-thiocarboxylate. This is a step in the synthesis of thiazole, in the thiamine biosynthesis pathway. The sulfur is donated as persulfide by IscS. The protein is Probable tRNA sulfurtransferase of Listeria monocytogenes serotype 4a (strain HCC23).